Here is a 227-residue protein sequence, read N- to C-terminus: Putative molybdenum transport system permease protein YvgM (227 aa).

Helical transmembrane passes span 17–37, 57–77, 94–114, 142–162, and 201–221; these read VVLSFQVAAVAGIVVIILGTL, FMLPLVLPPTVVGFILIVIFG, VIFTWWAAVIASAVVAFPLMY, VFIHISVPLAYPSLLTGSILS, and TLAWAWVVCIVVISFLMLFFI. One can recognise an ABC transmembrane type-1 domain in the interval 17 to 221; sequence VVLSFQVAAV…VISFLMLFFI (205 aa).

The protein belongs to the binding-protein-dependent transport system permease family. CysTW subfamily.

It localises to the cell membrane. In terms of biological role, could be part of the binding-protein-dependent transport system for molybdenum; probably responsible for the translocation of the substrate across the membrane. The protein is Putative molybdenum transport system permease protein YvgM (yvgM) of Bacillus subtilis (strain 168).